The primary structure comprises 185 residues: MYLFVNIIWRNFISKNNLPKANREIRAREVRLVDENSEMHGVVNIREALDMAERAGLDLVEISPNAVPPVCKILDFGKFKYENKKRLHEARKKQKIVVLKEMKFKPNISIGDFETKLRKIKEFLKDGDKVKISLWFKGREILHKEVGHELFKRIELALEGLIKIDQHAKMEGKQMIMIISPDIKV.

The protein belongs to the IF-3 family. As to quaternary structure, monomer.

The protein resides in the cytoplasm. Its function is as follows. IF-3 binds to the 30S ribosomal subunit and shifts the equilibrium between 70S ribosomes and their 50S and 30S subunits in favor of the free subunits, thus enhancing the availability of 30S subunits on which protein synthesis initiation begins. The protein is Translation initiation factor IF-3 of Rickettsia typhi (strain ATCC VR-144 / Wilmington).